We begin with the raw amino-acid sequence, 484 residues long: Glutamate--tRNA ligase (484 aa).

The 'HIGH' region signature appears at 11 to 21 (PSPTGLLHIGN). The short motif at 255-259 (KLSKR) is the 'KMSKS' region element. K258 serves as a coordination point for ATP.

This sequence belongs to the class-I aminoacyl-tRNA synthetase family. Glutamate--tRNA ligase type 1 subfamily. In terms of assembly, monomer.

The protein localises to the cytoplasm. It catalyses the reaction tRNA(Glu) + L-glutamate + ATP = L-glutamyl-tRNA(Glu) + AMP + diphosphate. Functionally, catalyzes the attachment of glutamate to tRNA(Glu) in a two-step reaction: glutamate is first activated by ATP to form Glu-AMP and then transferred to the acceptor end of tRNA(Glu). This is Glutamate--tRNA ligase from Streptococcus agalactiae serotype III (strain NEM316).